A 629-amino-acid polypeptide reads, in one-letter code: tRNA uridine 5-carboxymethylaminomethyl modification enzyme MnmG (629 aa).

FAD is bound by residues 13–18, Val-125, and Ser-180; that span reads GGGHAG. 273-287 provides a ligand contact to NAD(+); the sequence is GPRYCPSIEDKVMRF. An FAD-binding site is contributed by Gln-370.

The protein belongs to the MnmG family. As to quaternary structure, homodimer. Heterotetramer of two MnmE and two MnmG subunits. The cofactor is FAD.

The protein resides in the cytoplasm. Functionally, NAD-binding protein involved in the addition of a carboxymethylaminomethyl (cmnm) group at the wobble position (U34) of certain tRNAs, forming tRNA-cmnm(5)s(2)U34. This Cronobacter sakazakii (strain ATCC BAA-894) (Enterobacter sakazakii) protein is tRNA uridine 5-carboxymethylaminomethyl modification enzyme MnmG.